The primary structure comprises 320 residues: Malate dehydrogenase (320 aa).

NAD(+) contacts are provided by residues 10–15 and Asp-34; that span reads GSGMIG. Substrate is bound by residues Arg-83 and Arg-89. NAD(+) is bound by residues Asn-96 and 119-121; that span reads ITN. Asn-121 and Arg-152 together coordinate substrate. His-176 acts as the Proton acceptor in catalysis.

It belongs to the LDH/MDH superfamily. MDH type 3 family.

The enzyme catalyses (S)-malate + NAD(+) = oxaloacetate + NADH + H(+). Functionally, catalyzes the reversible oxidation of malate to oxaloacetate. This chain is Malate dehydrogenase, found in Hyphomonas neptunium (strain ATCC 15444).